Consider the following 906-residue polypeptide: Envelope glycoprotein B (906 aa).

Positions 1–31 (MESRIWCLVVCVNLCIVCLGAAVSSSSTSHA) are cleaved as a signal peptide. Low complexity predominate over residues 29–46 (SHATSSTHNGSHTSRTTS). A disordered region spans residues 29–51 (SHATSSTHNGSHTSRTTSAQTRS). Topologically, residues 32 to 750 (TSSTHNGSHT…EGVATFLKNP (719 aa)) are virion surface. N-linked (GlcNAc...) asparagine; by host glycans are attached at residues asparagine 37, asparagine 68, asparagine 73, and asparagine 85. Intrachain disulfides connect cysteine 94-cysteine 550, cysteine 111-cysteine 506, cysteine 185-cysteine 250, cysteine 246-cysteine 250, and cysteine 344-cysteine 391. Positions 152–158 (SYAYIYT) are involved in fusion and/or binding to host membrane. The N-linked (GlcNAc...) asparagine; by host glycan is linked to asparagine 208. Positions 237–244 (GSTWLYRE) are involved in fusion and/or binding to host membrane. 14 N-linked (GlcNAc...) asparagine; by host glycosylation sites follow: asparagine 281, asparagine 286, asparagine 302, asparagine 341, asparagine 383, asparagine 405, asparagine 409, asparagine 417, asparagine 447, asparagine 452, asparagine 464, asparagine 465, asparagine 554, and asparagine 585. An intrachain disulfide couples cysteine 573 to cysteine 610. Hydrophobic membrane proximal region regions lie at residues 696 to 748 (VEDK…TFLK) and 727 to 747 (VAIG…ATFL). The helical transmembrane segment at 751–771 (FGAFTIILVAIAVVIITYLIY) threads the bilayer. Over 772–906 (TRQRRLCTQP…LKDSDEEENV (135 aa)) the chain is Intravirion. Polar residues-rich tracts occupy residues 797–809 (VTSG…SLQA) and 859–876 (RAQQ…GTQD). 2 disordered regions span residues 797 to 837 (VTSG…TAAP) and 856 to 906 (AEQR…EENV). Positions 877–886 (KGQKPNLLDR) are enriched in basic and acidic residues. The Internalization motif motif lies at 894 to 897 (YRHL).

This sequence belongs to the herpesviridae glycoprotein B family. As to quaternary structure, homotrimer; disulfide-linked. Binds to heparan sulfate proteoglycans. Interacts with gH/gL heterodimer. Interacts with host TLR1 and TLR2. Interacts with host C-type lectin CD209/DC-SIGN. Interacts with host ITGB1, EGFR, and PDGFRA. Post-translationally, a proteolytic cleavage by host furin generates two subunits that remain linked by disulfide bonds.

Its subcellular location is the virion membrane. It localises to the host cell membrane. The protein resides in the host endosome membrane. It is found in the host Golgi apparatus membrane. In terms of biological role, envelope glycoprotein that plays a role in host cell entry, cell to-cell virus transmission, and fusion of infected cells. May be involved in the initial attachment via binding to heparan sulfate together with the gM/gN complex that binds heparin with higher affinity. Interacts with host integrin ITGB1, PDGFRA and EGFR that likely serve as postattachment entry receptors. Also participates in the fusion of viral and cellular membranes leading to virus entry into the host cell. Membrane fusion is mediated by the fusion machinery composed at least of gB and the heterodimer gH/gL. This Human cytomegalovirus (strain AD169) (HHV-5) protein is Envelope glycoprotein B.